The sequence spans 350 residues: Protein-glutamate methylesterase/protein-glutamine glutaminase 1 (350 aa).

Residues 6 to 123 form the Response regulatory domain; that stretch reads RVLVVDDSAL…GRSVENYAEE (118 aa). Asp57 bears the 4-aspartylphosphate mark. The region spanning 159–350 is the CheB-type methylesterase domain; the sequence is LGASGKIIFV…ARRVLGAVSA (192 aa). Residues Ser171, His197, and Asp293 contribute to the active site.

Belongs to the CheB family. Post-translationally, phosphorylated by CheA. Phosphorylation of the N-terminal regulatory domain activates the methylesterase activity.

It localises to the cytoplasm. It catalyses the reaction [protein]-L-glutamate 5-O-methyl ester + H2O = L-glutamyl-[protein] + methanol + H(+). The enzyme catalyses L-glutaminyl-[protein] + H2O = L-glutamyl-[protein] + NH4(+). Involved in chemotaxis. Part of a chemotaxis signal transduction system that modulates chemotaxis in response to various stimuli. Catalyzes the demethylation of specific methylglutamate residues introduced into the chemoreceptors (methyl-accepting chemotaxis proteins or MCP) by CheR. Also mediates the irreversible deamidation of specific glutamine residues to glutamic acid. The chain is Protein-glutamate methylesterase/protein-glutamine glutaminase 1 from Dechloromonas aromatica (strain RCB).